Consider the following 187-residue polypeptide: UPF0301 protein Cpar_0662 (187 aa).

The protein belongs to the UPF0301 (AlgH) family.

The sequence is that of UPF0301 protein Cpar_0662 from Chlorobaculum parvum (strain DSM 263 / NCIMB 8327) (Chlorobium vibrioforme subsp. thiosulfatophilum).